A 328-amino-acid polypeptide reads, in one-letter code: MIRPALRTDWTLEEARAIHALPFPELMHRAQTLHRAHFDPTAIETASLLSIKTGGCPEDCGYCSQSAHHDTGVKATKLMGTEEVLAAARRAKAAGAQRFCMGAAWRSPKDRDMDRLCDMVRGVADLGLETCMTLGMLSPGQVARLKAAGLDFYNHNIDTSPAYYARIASTRTMEDRLETVEQVRRGGIKVCCGGILGMGEAEEDRIALLVTLATLPAHPDSVPVNLWNEIEGVPVQGRAQAVDPFALVRIVALARILMPASVVRLSAGRTEMSDELQALCFLAGANSIFVGDQLLTTGNPAAWKDRDLLSRLGLHVAPARARPPVAAD.

In terms of domain architecture, Radical SAM core spans 41 to 260; that stretch reads TAIETASLLS…VALARILMPA (220 aa). Residues Cys-56, Cys-60, and Cys-63 each coordinate [4Fe-4S] cluster. Residues Cys-100, Cys-131, Cys-191, and Arg-264 each contribute to the [2Fe-2S] cluster site.

This sequence belongs to the radical SAM superfamily. Biotin synthase family. Homodimer. The cofactor is [4Fe-4S] cluster. It depends on [2Fe-2S] cluster as a cofactor.

It carries out the reaction (4R,5S)-dethiobiotin + (sulfur carrier)-SH + 2 reduced [2Fe-2S]-[ferredoxin] + 2 S-adenosyl-L-methionine = (sulfur carrier)-H + biotin + 2 5'-deoxyadenosine + 2 L-methionine + 2 oxidized [2Fe-2S]-[ferredoxin]. Its pathway is cofactor biosynthesis; biotin biosynthesis; biotin from 7,8-diaminononanoate: step 2/2. Functionally, catalyzes the conversion of dethiobiotin (DTB) to biotin by the insertion of a sulfur atom into dethiobiotin via a radical-based mechanism. The sequence is that of Biotin synthase from Cereibacter sphaeroides (strain ATCC 17023 / DSM 158 / JCM 6121 / CCUG 31486 / LMG 2827 / NBRC 12203 / NCIMB 8253 / ATH 2.4.1.) (Rhodobacter sphaeroides).